Here is a 233-residue protein sequence, read N- to C-terminus: Large ribosomal subunit protein uL1 (233 aa).

Belongs to the universal ribosomal protein uL1 family. Part of the 50S ribosomal subunit.

In terms of biological role, binds directly to 23S rRNA. The L1 stalk is quite mobile in the ribosome, and is involved in E site tRNA release. Its function is as follows. Protein L1 is also a translational repressor protein, it controls the translation of the L11 operon by binding to its mRNA. This Shewanella frigidimarina (strain NCIMB 400) protein is Large ribosomal subunit protein uL1.